Here is a 420-residue protein sequence, read N- to C-terminus: Glycerol-3-phosphate dehydrogenase [NAD(+)] 2, chloroplastic (420 aa).

The N-terminal 45 residues, 1-45 (MAASVQPACLDLHFSGKHPPLLKHNAIIVRCVSSPNVIPEADSIS), are a transit peptide targeting the chloroplast. NAD(+)-binding positions include 94-99 (GGGSFG), Phe-171, Lys-194, and Ala-228. Lys-194 serves as a coordination point for substrate. Lys-279 (proton acceptor) is an active-site residue. Residues Arg-343 and Glu-369 each coordinate NAD(+). 343-344 (RN) provides a ligand contact to substrate.

It belongs to the NAD-dependent glycerol-3-phosphate dehydrogenase family.

It is found in the plastid. The protein localises to the chloroplast. The enzyme catalyses sn-glycerol 3-phosphate + NAD(+) = dihydroxyacetone phosphate + NADH + H(+). It participates in membrane lipid metabolism; glycerophospholipid metabolism. Functionally, required to supply glycerol-3-phosphate in the chloroplast for the synthesis of glycerolipids. Required for activation of systemic acquired resistance (SAR). Provision of glycerol-3-phosphate may be involved in generating lipid signals necessary for mediating defense responses and SAR. The chain is Glycerol-3-phosphate dehydrogenase [NAD(+)] 2, chloroplastic (GLY1) from Arabidopsis thaliana (Mouse-ear cress).